The chain runs to 366 residues: Glucan organizing enzyme 1 (366 aa).

Residues 1–24 (MLPLWARGGKPIVIPLPQKRHITL) are Extracellular-facing. The helical transmembrane segment at 25-45 (PALPILLLLLGTGFLLHSLFF) threads the bilayer. At 46–366 (PPPPPHPPGK…ETYKKWKRGH (321 aa)) the chain is on the cytoplasmic side.

This sequence belongs to the glycosyltransferase 32 family.

The protein resides in the cell membrane. In terms of biological role, plays a role in the localization of glycogen rosettes to the plasma membrane. Required for correct cell wall organization and may facilitate the connection between beta-1,3-glucan and beta-1,6-glucan in the cell wall. In Cryptococcus neoformans var. grubii serotype A (strain H99 / ATCC 208821 / CBS 10515 / FGSC 9487) (Filobasidiella neoformans var. grubii), this protein is Glucan organizing enzyme 1.